We begin with the raw amino-acid sequence, 685 residues long: MMMVARVATAEHVGSAGASLPQTPGSRSFALGAHPGPQKRIGGPAQGQTAFITPLVTPDGIYSRPSSPYMQASPLLKGSESGGSAGSPQSPDAPSSASGASVGNAIGSGYTGNVSVAIRIKPSESSTKDPWYASNDRLIHTEFGEFQFDHVFTKGVCNQEVYQALGVPIIDKLFEGYNATIFAYGMTGSGKTFTMSGNKQEPGLIPQCVGNIFDRISSEHHGASLAYEVKVSYLEIYNEKIYDLLNYVDRQAGSTGQPSRNATGLKIRDDSKYGVKVVDLTEQLVSSHEDVMKWIATGDRNRKTGETDFNTRSSRSHAIVLLRLTRYDLKTGSEATSTLSLCDLAGSERAVTQIVRRKEGAFINKSLLALGTVIAKLSMLGSQANGLQPSPAAGHIPYRDSKLTRILQPALTGDSIITTICTIDSKAESSTETTNTVRFASRAKNIALNVRKNEMDSHAEKDTIIQNLRKQLDEQHETIVMLRRSAAAPSGNGSTSPLDSPGVGGTSLSERTHNMEKGLLEVENSILKTKLEHCEKLLDKDMMVLEDPHVREIVEMLPLDIASVLESKVQGMESQLRQYRVYVQKLESDLLKAQRNIITTHSVQFNRQSTANVQEKYGSDVDIELLLEEQEAELMELRNALKRKDKMIEALQSARRLRDSALSPTTTVLLQRKESVIDPRDPQPV.

Disordered regions lie at residues 11 to 46 and 63 to 101; these read EHVGSAGASLPQTPGSRSFALGAHPGPQKRIGGPAQ and SRPSSPYMQASPLLKGSESGGSAGSPQSPDAPSSASGAS. The span at 86–101 shows a compositional bias: low complexity; sequence GSPQSPDAPSSASGAS. The Kinesin motor domain maps to 113 to 446; sequence NVSVAIRIKP…VRFASRAKNI (334 aa). 185–192 lines the ATP pocket; sequence GMTGSGKT. 2 coiled-coil regions span residues 464 to 486 and 520 to 663; these read IIQNLRKQLDEQHETIVMLRRSA and LEVE…SALS. A disordered region spans residues 485–510; the sequence is SAAAPSGNGSTSPLDSPGVGGTSLSE.

This sequence belongs to the TRAFAC class myosin-kinesin ATPase superfamily. Kinesin family.

It localises to the cytoplasm. It is found in the cytoskeleton. Its function is as follows. Required for assembly of the mitotic spindle. In Eremothecium gossypii (strain ATCC 10895 / CBS 109.51 / FGSC 9923 / NRRL Y-1056) (Yeast), this protein is Kinesin-like protein KIP2 (KIP2).